Reading from the N-terminus, the 830-residue chain is MAMAMAMPSSSPPLFFSLLNLMLLLLLLAPYCSAVSVPNNNTHHRSSSPTQTTLQQLHSPDSPPPPPLPTPTVTTPTPPPPPPAPRPPRRHHRIPPPPPPLLPTPPPPPASISPTPAPPLPPPPAPAPPPTPTPKFPSSSANPSPPDAYPFTNYPFFPNFAAPPPPTQQQQQQPSGDGGLPTFPANISTLVHPTQRPPRRFPVLQALLLSFLSLCLLLLSALLSLHLFRRLRHRHHSHSHPNARSPSSRSGATNHHHDDDGDGDEEGRRLKPPPMPTSSSNPSTEFLYLGTLAAPPQQPPPTTSHLRPGSPELRPLPPLPRVGPPSGEFASRSSASDPSTAPPAAAEASSSSLSPSSPSASSPTLGSSPVHLRPPSIPQPRGRAPNPSPPKRRPQPPEPMAAHAWNPFVPMPPQAPPSEEEEEHSPSEKSMRKSRPLHSDKLKPGSLHMKDEMIHLYLNNSMAAAMPREVCLLGAPRCHGIGMLVGALGISKEQVREAILEGNAHGLGVEALRMLMQMVLTNEEELKLKYFKDDLSTKLCPVEAFLKAVLDIPFAFKRMDAMLYVANFYLEVNQLRMSYATLEAACQELKNSRLFHKVLEAVLNFGNLMSIDTGSPNSHAMEPNTLLKIVDVKGADGKAALLQFVVHEIVKPEGHSPVCKTNANTTQQYDVEYRKHGLQVVSKLAAELSNTKKASSIDMMKLSRDVSELGVGLGKIHDVLRLNSMVTSADSARRFHNTMSMFLRQAEEEILKLQAQESICLSCVKEVTEYFHGELSSGDEGHMARVFGSVREFLAMLDRICKEAGEEMKSSGWMMGRDWNMAAPMGMTTP.

The first 34 residues, 1-34, serve as a signal peptide directing secretion; the sequence is MAMAMAMPSSSPPLFFSLLNLMLLLLLLAPYCSA. Polar residues predominate over residues 40–59; that stretch reads NNTHHRSSSPTQTTLQQLHS. A disordered region spans residues 40–195; sequence NNTHHRSSSP…NISTLVHPTQ (156 aa). Pro residues-rich tracts occupy residues 61–86 and 95–135; these read DSPPPPPLPTPTVTTPTPPPPPPAPR and PPPP…PTPK. Residues 149–160 are compositionally biased toward low complexity; that stretch reads YPFTNYPFFPNF. The helical transmembrane segment at 203–223 threads the bilayer; sequence VLQALLLSFLSLCLLLLSALL. The interval 235 to 446 is disordered; that stretch reads HHSHSHPNAR…LHSDKLKPGS (212 aa). The segment covering 314 to 323 has biased composition (pro residues); the sequence is RPLPPLPRVG. A compositionally biased stretch (low complexity) spans 324–369; that stretch reads PPSGEFASRSSASDPSTAPPAAAEASSSSLSPSSPSASSPTLGSSP. One can recognise an FH2 domain in the interval 390–823; the sequence is PKRRPQPPEP…MMGRDWNMAA (434 aa). Over residues 424–446 the composition is skewed to basic and acidic residues; that stretch reads HSPSEKSMRKSRPLHSDKLKPGS.

The protein belongs to the formin-like family. Class-I subfamily.

It is found in the membrane. In Oryza sativa subsp. japonica (Rice), this protein is Formin-like protein 14 (FH14).